Reading from the N-terminus, the 443-residue chain is Trigger factor (443 aa).

Residues 161–246 (ADGVTITYHG…VISVTAPRLP (86 aa)) form the PPIase FKBP-type domain.

It belongs to the FKBP-type PPIase family. Tig subfamily.

It localises to the cytoplasm. The enzyme catalyses [protein]-peptidylproline (omega=180) = [protein]-peptidylproline (omega=0). Its function is as follows. Involved in protein export. Acts as a chaperone by maintaining the newly synthesized protein in an open conformation. Functions as a peptidyl-prolyl cis-trans isomerase. This Nitrosococcus oceani (strain ATCC 19707 / BCRC 17464 / JCM 30415 / NCIMB 11848 / C-107) protein is Trigger factor.